Reading from the N-terminus, the 450-residue chain is Interferon regulatory factor 4 (450 aa).

Residues 21–129 (NGKLRQWLID…DPYKVYRIVP (109 aa)) constitute a DNA-binding region (IRF tryptophan pentad repeat). Phosphoserine; by ROCK2 is present on residues S446 and S447.

This sequence belongs to the IRF family. In terms of assembly, interacts with SPIB and DEF6. Interacts with the BATF-JUNB heterodimer. Interacts with BATF (via bZIP domain); the interaction is direct. Directly interacts with NLRP3 in the nucleus of Th2 cells; this interaction enhances IRF4 ability to bind to the IL4 promoter and is required for optimal IRF4-dependent IL4 transcription. Interacts with SPI1. In terms of processing, phosphorylation by ROCK2 regulates IL-17 and IL-21 production. In terms of tissue distribution, lymphoid cells.

The protein localises to the nucleus. It is found in the cytoplasm. Functionally, transcriptional activator. Binds to the interferon-stimulated response element (ISRE) of the MHC class I promoter. Binds the immunoglobulin lambda light chain enhancer, together with PU.1. Probably plays a role in ISRE-targeted signal transduction mechanisms specific to lymphoid cells. Involved in CD8(+) dendritic cell differentiation by forming a complex with the BATF-JUNB heterodimer in immune cells, leading to recognition of AICE sequence (5'-TGAnTCA/GAAA-3'), an immune-specific regulatory element, followed by cooperative binding of BATF and IRF4 and activation of genes. In Mus musculus (Mouse), this protein is Interferon regulatory factor 4.